A 500-amino-acid polypeptide reads, in one-letter code: Mucin-like protein 3 (500 aa).

An N-terminal signal peptide occupies residues 1–27; it reads MAQPTSGLYSTFGFFICLLFFPASWEA. Over 28–429 the chain is Extracellular; sequence GANTFQELQK…GENNSFPVWA (402 aa). 2 disordered regions span residues 55 to 198 and 275 to 324; these read THRA…SQKP and EGKT…PTAS. Over residues 58-71 the composition is skewed to basic and acidic residues; that stretch reads ASSDQKTSRQHPPD. A compositionally biased stretch (polar residues) spans 76-89; sequence TATQKAKNQCNTTR. N-linked (GlcNAc...) asparagine glycosylation is present at N108. 2 stretches are compositionally biased toward basic and acidic residues: residues 111–123 and 132–142; these read VRHE…EKDL and ARNERSADDPR. N148 is a glycosylation site (N-linked (GlcNAc...) asparagine). 3 stretches are compositionally biased toward polar residues: residues 159–178, 279–289, and 298–324; these read PRRN…TTKS, SPASESSSQAQ, and TSAS…PTAS. Residues 430-450 traverse the membrane as a helical segment; that stretch reads IVIVILMAVIILLVFIGLILL. Over 451–500 the chain is Cytoplasmic; it reads VSCASRARHVLTQNSEEPEPQPEDKGSRNSYPVYLMEQQNLNLNQIPSPP.

Its subcellular location is the cell membrane. The protein resides in the cytoplasm. Functionally, may modulate NF-kappaB signaling and play a role in cell growth. The chain is Mucin-like protein 3 from Mus musculus (Mouse).